Reading from the N-terminus, the 153-residue chain is Protein Smg homolog (153 aa).

This sequence belongs to the Smg family.

This chain is Protein Smg homolog, found in Neisseria gonorrhoeae (strain ATCC 700825 / FA 1090).